Consider the following 257-residue polypeptide: Thiazole synthase (257 aa).

The active-site Schiff-base intermediate with DXP is the Lys100. 1-deoxy-D-xylulose 5-phosphate contacts are provided by residues Gly161, 187-188 (AG), and 209-210 (NT).

It belongs to the ThiG family. In terms of assembly, homotetramer. Forms heterodimers with either ThiH or ThiS.

Its subcellular location is the cytoplasm. The catalysed reaction is [ThiS sulfur-carrier protein]-C-terminal-Gly-aminoethanethioate + 2-iminoacetate + 1-deoxy-D-xylulose 5-phosphate = [ThiS sulfur-carrier protein]-C-terminal Gly-Gly + 2-[(2R,5Z)-2-carboxy-4-methylthiazol-5(2H)-ylidene]ethyl phosphate + 2 H2O + H(+). It participates in cofactor biosynthesis; thiamine diphosphate biosynthesis. In terms of biological role, catalyzes the rearrangement of 1-deoxy-D-xylulose 5-phosphate (DXP) to produce the thiazole phosphate moiety of thiamine. Sulfur is provided by the thiocarboxylate moiety of the carrier protein ThiS. In vitro, sulfur can be provided by H(2)S. This chain is Thiazole synthase, found in Pelagibacter ubique (strain HTCC1062).